The following is a 505-amino-acid chain: Mannosylglucosyl-3-phosphoglycerate synthase (505 aa).

As to quaternary structure, monomer in solution.

It carries out the reaction (2R)-2-O-(alpha-D-glucopyranosyl)-3-phospho-glycerate + GDP-alpha-D-mannose = (2R)-2-O-[alpha-D-mannopyranosyl-(1-&gt;2)-alpha-D-glucopyranosyl]-3-phospho-glycerate + GDP + H(+). Not strictly dependent on divalent cations, but the presence of Mn(2+), Ca(2+), Mg(2+) or Co(2+) stimulates activity. Its function is as follows. Involved in the biosynthesis of the compatible solute mannosylglucosylglycerate through a phosphorylating pathway. Catalyzes the conversion of glucosyl-3-phosphoglycerate (GPG) to mannosylglucosyl-3-phosphoglycerate (MGPG). This chain is Mannosylglucosyl-3-phosphoglycerate synthase, found in Petrotoga mobilis (strain DSM 10674 / SJ95).